A 367-amino-acid chain; its full sequence is Large ribosomal subunit protein mL38 (367 aa).

The transit peptide at 1 to 29 (MLRRSIHTTKILQKPNATSHIWSDFTTRP) directs the protein to the mitochondrion.

The protein belongs to the phosphatidylethanolamine-binding protein family. Mitochondrion-specific ribosomal protein mL38 subfamily. Component of the mitochondrial large ribosomal subunit (mt-LSU). Mature yeast 74S mitochondrial ribosomes consist of a small (37S) and a large (54S) subunit. The 37S small subunit contains a 15S ribosomal RNA (15S mt-rRNA) and 34 different proteins. The 54S large subunit contains a 21S rRNA (21S mt-rRNA) and 46 different proteins.

It is found in the mitochondrion. Functionally, component of the mitochondrial ribosome (mitoribosome), a dedicated translation machinery responsible for the synthesis of mitochondrial genome-encoded proteins, including at least some of the essential transmembrane subunits of the mitochondrial respiratory chain. The mitoribosomes are attached to the mitochondrial inner membrane and translation products are cotranslationally integrated into the membrane. The polypeptide is Large ribosomal subunit protein mL38 (MRPL35) (Saccharomyces cerevisiae (strain ATCC 204508 / S288c) (Baker's yeast)).